Consider the following 228-residue polypeptide: Phosphoribosylformylglycinamidine synthase subunit PurQ (228 aa).

Residues 2 to 225 enclose the Glutamine amidotransferase type-1 domain; sequence KAAVISFPGS…INQTEGADVR (224 aa). The Nucleophile role is filled by Cys-86. Active-site residues include His-194 and Glu-196.

Part of the FGAM synthase complex composed of 1 PurL, 1 PurQ and 2 PurS subunits.

It localises to the cytoplasm. The catalysed reaction is N(2)-formyl-N(1)-(5-phospho-beta-D-ribosyl)glycinamide + L-glutamine + ATP + H2O = 2-formamido-N(1)-(5-O-phospho-beta-D-ribosyl)acetamidine + L-glutamate + ADP + phosphate + H(+). The enzyme catalyses L-glutamine + H2O = L-glutamate + NH4(+). It participates in purine metabolism; IMP biosynthesis via de novo pathway; 5-amino-1-(5-phospho-D-ribosyl)imidazole from N(2)-formyl-N(1)-(5-phospho-D-ribosyl)glycinamide: step 1/2. Its function is as follows. Part of the phosphoribosylformylglycinamidine synthase complex involved in the purines biosynthetic pathway. Catalyzes the ATP-dependent conversion of formylglycinamide ribonucleotide (FGAR) and glutamine to yield formylglycinamidine ribonucleotide (FGAM) and glutamate. The FGAM synthase complex is composed of three subunits. PurQ produces an ammonia molecule by converting glutamine to glutamate. PurL transfers the ammonia molecule to FGAR to form FGAM in an ATP-dependent manner. PurS interacts with PurQ and PurL and is thought to assist in the transfer of the ammonia molecule from PurQ to PurL. The protein is Phosphoribosylformylglycinamidine synthase subunit PurQ of Lacticaseibacillus casei (strain BL23) (Lactobacillus casei).